We begin with the raw amino-acid sequence, 152 residues long: MIALIQRVRRAEVRVGDRVTGAIDAGLLALVCAERGDTDAVADKLLAKVLGYRVFSDAAGKMNLPVQNIDGAGRAGGLLLVSQFTLAADTNSGLRPSFTPAAPPDEGKRLFDYFVAAARAKHAIVETGEFGAEMQVSLVNDGPVTFWLQTRA.

The short motif at 142–143 is the Gly-cisPro motif, important for rejection of L-amino acids element; that stretch reads GP.

Belongs to the DTD family. In terms of assembly, homodimer.

The protein localises to the cytoplasm. The catalysed reaction is glycyl-tRNA(Ala) + H2O = tRNA(Ala) + glycine + H(+). The enzyme catalyses a D-aminoacyl-tRNA + H2O = a tRNA + a D-alpha-amino acid + H(+). Its function is as follows. An aminoacyl-tRNA editing enzyme that deacylates mischarged D-aminoacyl-tRNAs. Also deacylates mischarged glycyl-tRNA(Ala), protecting cells against glycine mischarging by AlaRS. Acts via tRNA-based rather than protein-based catalysis; rejects L-amino acids rather than detecting D-amino acids in the active site. By recycling D-aminoacyl-tRNA to D-amino acids and free tRNA molecules, this enzyme counteracts the toxicity associated with the formation of D-aminoacyl-tRNA entities in vivo and helps enforce protein L-homochirality. In Paraburkholderia phymatum (strain DSM 17167 / CIP 108236 / LMG 21445 / STM815) (Burkholderia phymatum), this protein is D-aminoacyl-tRNA deacylase.